A 261-amino-acid chain; its full sequence is Cytochrome c oxidase subunit 3 (261 aa).

The Mitochondrial matrix portion of the chain corresponds to 1-15 (MTHQTHAYHMVNPSP). A helical membrane pass occupies residues 16–34 (WPLTGALSALLMTSGLIMW). Residues 35–40 (FHFNST) are Mitochondrial intermembrane-facing. The chain crosses the membrane as a helical span at residues 41–66 (TLLMLGLTTNMLTMYQWWRDIIREST). Topologically, residues 67 to 72 (FQGHHT) are mitochondrial matrix. A helical transmembrane segment spans residues 73-105 (PSVQKGLRYGMILFIISEVLFFTGFFWAFYHSS). The Mitochondrial intermembrane segment spans residues 106–128 (LAPTPELGGCWPPTGIHPLNPLE). Residues 129–152 (VPLLNTSVLLASGVSITWAHHSLM) form a helical membrane-spanning segment. At 153-155 (EGN) the chain is on the mitochondrial matrix side. Residues 156–183 (RNHMLQALFITIALGVYFTLLQASEYYE) traverse the membrane as a helical segment. Residues 184–190 (APFTISD) are Mitochondrial intermembrane-facing. The helical transmembrane segment at 191–223 (GVYGSTFFVATGFHGLHVIIGSTFLIVCFFRQL) threads the bilayer. At 224 to 232 (KFHFTSNHH) the chain is on the mitochondrial matrix side. The helical transmembrane segment at 233-256 (FGFEAAAWYWHFVDVVWLFLYVSI) threads the bilayer. At 257–261 (YWWGS) the chain is on the mitochondrial intermembrane side.

Belongs to the cytochrome c oxidase subunit 3 family. Component of the cytochrome c oxidase (complex IV, CIV), a multisubunit enzyme composed of 14 subunits. The complex is composed of a catalytic core of 3 subunits MT-CO1, MT-CO2 and MT-CO3, encoded in the mitochondrial DNA, and 11 supernumerary subunits COX4I, COX5A, COX5B, COX6A, COX6B, COX6C, COX7A, COX7B, COX7C, COX8 and NDUFA4, which are encoded in the nuclear genome. The complex exists as a monomer or a dimer and forms supercomplexes (SCs) in the inner mitochondrial membrane with NADH-ubiquinone oxidoreductase (complex I, CI) and ubiquinol-cytochrome c oxidoreductase (cytochrome b-c1 complex, complex III, CIII), resulting in different assemblies (supercomplex SCI(1)III(2)IV(1) and megacomplex MCI(2)III(2)IV(2)).

The protein localises to the mitochondrion inner membrane. The enzyme catalyses 4 Fe(II)-[cytochrome c] + O2 + 8 H(+)(in) = 4 Fe(III)-[cytochrome c] + 2 H2O + 4 H(+)(out). Functionally, component of the cytochrome c oxidase, the last enzyme in the mitochondrial electron transport chain which drives oxidative phosphorylation. The respiratory chain contains 3 multisubunit complexes succinate dehydrogenase (complex II, CII), ubiquinol-cytochrome c oxidoreductase (cytochrome b-c1 complex, complex III, CIII) and cytochrome c oxidase (complex IV, CIV), that cooperate to transfer electrons derived from NADH and succinate to molecular oxygen, creating an electrochemical gradient over the inner membrane that drives transmembrane transport and the ATP synthase. Cytochrome c oxidase is the component of the respiratory chain that catalyzes the reduction of oxygen to water. Electrons originating from reduced cytochrome c in the intermembrane space (IMS) are transferred via the dinuclear copper A center (CU(A)) of subunit 2 and heme A of subunit 1 to the active site in subunit 1, a binuclear center (BNC) formed by heme A3 and copper B (CU(B)). The BNC reduces molecular oxygen to 2 water molecules using 4 electrons from cytochrome c in the IMS and 4 protons from the mitochondrial matrix. The polypeptide is Cytochrome c oxidase subunit 3 (MT-CO3) (Pelea capreolus (Gray rhebok)).